The primary structure comprises 273 residues: Zinc finger protein 32 (273 aa).

3 C2H2-type zinc fingers span residues 77–99 (YECQ…ERIH), 105–127 (FECT…QRIH), and 133–155 (YQCK…ERLH). Cys-79, Cys-82, His-95, His-99, Cys-107, Cys-110, His-123, His-127, Ser-141, Gln-144, Gly-157, Tyr-161, Phe-198, Lys-201, Leu-214, Ala-218, Cys-247, Cys-250, His-263, and Cys-267 together coordinate Zn(2+). 2 C2H2-type zinc fingers span residues 161 to 183 (YECA…RRVH) and 189 to 211 (YRCD…IRVH). Residues 217–239 (YACTQCRKSFHTRGNCILHGKIH) form a C2H2-type 6 zinc finger. The CCHC-type zinc finger occupies 245–267 (YLCGQCGKSFTQRGSLAVHQRSC).

Belongs to the krueppel C2H2-type zinc-finger protein family.

The protein resides in the nucleus. May be involved in transcriptional regulation. This is Zinc finger protein 32 (ZNF32) from Homo sapiens (Human).